Consider the following 398-residue polypeptide: Argininosuccinate synthase (398 aa).

9–17 contacts ATP; the sequence is AYSGGLDTS. L-citrulline-binding residues include Tyr87 and Ser92. Gly117 lines the ATP pocket. Residues Thr119, Asn123, and Asp124 each coordinate L-aspartate. Asn123 provides a ligand contact to L-citrulline. Arg127, Ser176, Ser185, Glu261, and Tyr273 together coordinate L-citrulline.

It belongs to the argininosuccinate synthase family. Type 1 subfamily. In terms of assembly, homotetramer.

The protein localises to the cytoplasm. The enzyme catalyses L-citrulline + L-aspartate + ATP = 2-(N(omega)-L-arginino)succinate + AMP + diphosphate + H(+). Its pathway is amino-acid biosynthesis; L-arginine biosynthesis; L-arginine from L-ornithine and carbamoyl phosphate: step 2/3. This Clostridium tetani (strain Massachusetts / E88) protein is Argininosuccinate synthase.